The sequence spans 209 residues: Redox-sensing transcriptional repressor Rex (209 aa).

The H-T-H motif DNA-binding region spans 16–55 (LYYRFIQNLSLSGKQRVSSAELSEAVKVDSATIRRDFSYF). NAD(+) is bound at residue 90-95 (GVGNLG).

Belongs to the transcriptional regulatory Rex family. As to quaternary structure, homodimer.

The protein localises to the cytoplasm. Functionally, modulates transcription in response to changes in cellular NADH/NAD(+) redox state. This chain is Redox-sensing transcriptional repressor Rex, found in Bacillus anthracis (strain A0248).